Reading from the N-terminus, the 343-residue chain is Endoglucanase C (343 aa).

The active-site Proton donor is the Glu-140. The Nucleophile role is filled by Glu-280.

It belongs to the glycosyl hydrolase 5 (cellulase A) family.

The enzyme catalyses Endohydrolysis of (1-&gt;4)-beta-D-glucosidic linkages in cellulose, lichenin and cereal beta-D-glucans.. It participates in glycan metabolism; cellulose degradation. This enzyme catalyzes the endohydrolysis of 1,4-beta-glucosidic linkages in cellulose, lichenin and cereal beta-D-glucans. The protein is Endoglucanase C (celC) of Acetivibrio thermocellus (strain ATCC 27405 / DSM 1237 / JCM 9322 / NBRC 103400 / NCIMB 10682 / NRRL B-4536 / VPI 7372) (Clostridium thermocellum).